Here is a 147-residue protein sequence, read N- to C-terminus: Small ribosomal subunit protein uS12 (147 aa).

This sequence belongs to the universal ribosomal protein uS12 family. As to quaternary structure, part of the 30S ribosomal subunit.

Its function is as follows. With S4 and S5 plays an important role in translational accuracy. Located at the interface of the 30S and 50S subunits. This Sulfolobus acidocaldarius (strain ATCC 33909 / DSM 639 / JCM 8929 / NBRC 15157 / NCIMB 11770) protein is Small ribosomal subunit protein uS12.